Reading from the N-terminus, the 490-residue chain is MAGGGGKSVAAALAMACFLLILAAFAPPAAAAPPDIMSIIRYNAEHGVRGLERTEAEARAAYDLWLARHRRGGGGGSRNGFIGEHERRFRVFWDNLKFVDAHNARADERGGFRLGMNRFADLTNGEFRATYLGTTPAGRGRRVGEAYRHDGVEALPDSVDWRDKGAVVAPVKNQGQCGSCWAFSAVAAVEGINKIVTGELVSLSEQELVECARNGQNSGCNGGIMDDAFAFIARNGGLDTEEDYPYTAMDGKCNLAKRSRKVVSIDGFEDVPENDELSLQKAVAHQPVSVAIDAGGREFQLYDSGVFTGRCGTNLDHGVVAVGYGTDAATGAAYWTVRNSWGPDWGENGYIRMERNVTARTGKCGIAMMASYPIKKGPNPKPSPPSPAPSPPQQCDRYSKCPAGTTCCCNYGIRNHCIVWGCCPVEGATCCKDHSTCCPKEYPVCNAKARTCSKSKNSPYNIRTPAAMARSVPEQPDSISFVVLNREDLV.

The N-terminal stretch at 1–31 (MAGGGGKSVAAALAMACFLLILAAFAPPAAA) is a signal peptide. A propeptide spans 32-154 (APPDIMSIIR…EAYRHDGVEA (123 aa)) (activation peptide). 5 disulfide bridges follow: Cys177–Cys220, Cys211–Cys253, Cys311–Cys364, Cys395–Cys407, and Cys401–Cys422. The active site involves Cys180. Residues His317 and Asn339 contribute to the active site. Asn356 is a glycosylation site (N-linked (GlcNAc...) asparagine). A propeptide spans 379 to 490 (NPKPSPPSPA…FVVLNREDLV (112 aa)) (removed in mature form).

This sequence belongs to the peptidase C1 family. Highly expressed in the tapetum and developing pollen of the anther locules. Weakly expressed in root and germinating seed, hardly in the anther-less-flower and not detected in leaf.

Cysteine protease that may play a role in pollen development. May be regulated by the transcription factor UDT1 in developing anthers and play a role in tapetum development. Positively regulated by the transcription factor TDR in developing anthers and may play a role in tapetum programmed cell death (PCD). In Oryza sativa subsp. japonica (Rice), this protein is Cysteine protease 1 (CP1).